A 278-amino-acid polypeptide reads, in one-letter code: Thioredoxin-related transmembrane protein 1 (278 aa).

The first 26 residues, 1-26, serve as a signal peptide directing secretion; it reads MAPSGSLRIPVAVLLLLLWGAPWAHG. Positions 27-132 constitute a Thioredoxin domain; it reads KRSDVRIITD…FINFISDKEW (106 aa). Residues 27 to 180 are Extracellular-facing; it reads KRSDVRIITD…EDLGLPIWGS (154 aa). Catalysis depends on nucleophile residues cysteine 56 and cysteine 59. A disulfide bridge connects residues cysteine 56 and cysteine 59. Residues 181-203 form a helical membrane-spanning segment; it reads YTVFALATLLSGLLLGLFMIFVA. Over 204-278 the chain is Cytoplasmic; that stretch reads DCLCPSKRRR…VGPSLATDKS (75 aa). S-palmitoyl cysteine attachment occurs at residues cysteine 205 and cysteine 207. A disordered region spans residues 213–278; sequence RPQPYPSRKL…VGPSLATDKS (66 aa). A phosphoserine mark is found at serine 226, serine 245, serine 268, serine 272, and serine 278. Over residues 235–250 the composition is skewed to acidic residues; that stretch reads EEQEADVEDVSEEESE.

In terms of assembly, interacts with ATP2A2. Post-translationally, palmitoylated; palmitoylation is required for localization to mitochondria-associated endoplasmic reticulum membrane (MAM).

It localises to the endoplasmic reticulum membrane. It is found in the mitochondrion membrane. The protein resides in the secreted. The enzyme catalyses Catalyzes the rearrangement of -S-S- bonds in proteins.. In terms of biological role, thiredoxin domain-containing protein that participates in various redox reactions through the reversible oxidation of its active center dithiol to a disulfide and catalyze dithiol-disulfide exchange reactions. Acts as a key inhibitor of the alternative triglyceride biosynthesis pathway by inhibiting the activity of TMEM68/DIESL at the endoplasmic reticulum, thereby restricting accumulation of triacylglycerol. The alternative triglyceride biosynthesis pathway mediates formation of triacylglycerol from diacylglycerol and membrane phospholipids. Acts as a protein disulfide isomerase by catalyzing formation or reduction of disulfide bonds. Specifically mediates formation of disulfide bonds of transmembrane proteins at the endoplasmic reticulum membrane. Involved in endoplasmic reticulum-associated degradation (ERAD) via its protein disulfide isomerase activity by acting on folding-defective polypeptides at the endoplasmic reticulum membrane. Acts as a negative regulator of platelet aggregation following secretion in the extracellular space. Acts as a regulator of endoplasmic reticulum-mitochondria contact sites via its ability to regulate redox signals. Regulates endoplasmic reticulum-mitochondria Ca(2+) flux. This is Thioredoxin-related transmembrane protein 1 (TMX1) from Bos taurus (Bovine).